A 116-amino-acid chain; its full sequence is Large ribosomal subunit protein bL19 (116 aa).

This sequence belongs to the bacterial ribosomal protein bL19 family.

In terms of biological role, this protein is located at the 30S-50S ribosomal subunit interface and may play a role in the structure and function of the aminoacyl-tRNA binding site. This chain is Large ribosomal subunit protein bL19, found in Pseudomonas putida (strain ATCC 700007 / DSM 6899 / JCM 31910 / BCRC 17059 / LMG 24140 / F1).